The sequence spans 388 residues: Non-structural maintenance of chromosome element 5 (388 aa).

Component of the smc5/smc6 complex which consists of two subcomplexes, smc5-smc6-nse2 and nse1-nse2-nse4. Interacts with nse6 and rfp1.

It localises to the cytoplasm. Its subcellular location is the nucleus. The protein resides in the chromosome. Acts in a DNA repair pathway for removal of UV-induced DNA damage that is distinct from classical nucleotide excision repair and in repair of ionizing radiation damage. Functions in homologous recombination repair of DNA double strand breaks and in recovery of stalled replication forks. May prevent formation of excessive Holliday junctions or assist in their resolution. The sequence is that of Non-structural maintenance of chromosome element 5 (nse5) from Schizosaccharomyces pombe (strain 972 / ATCC 24843) (Fission yeast).